A 585-amino-acid polypeptide reads, in one-letter code: ATP-dependent lipid A-core flippase (585 aa).

The next 5 membrane-spanning stretches (helical) occupy residues 16-36 (LWPY…ALII), 66-86 (FLSM…ASGF), 156-176 (IIGL…ILLV), 252-272 (AIAN…VLVL), and 278-298 (LRAE…FGLM). An ABC transmembrane type-1 domain is found at 29-313 (VAVVALIINA…LTNVTSQFQR (285 aa)). In terms of domain architecture, ABC transporter spans 345–581 (IQVKNVTFTY…DGAYAQLHRI (237 aa)). ATP is bound at residue 379–386 (GRSGSGKS).

This sequence belongs to the ABC transporter superfamily. Lipid exporter (TC 3.A.1.106) family. As to quaternary structure, homodimer.

The protein localises to the cell inner membrane. The catalysed reaction is ATP + H2O + lipid A-core oligosaccharideSide 1 = ADP + phosphate + lipid A-core oligosaccharideSide 2.. Functionally, involved in lipopolysaccharide (LPS) biosynthesis. Translocates lipid A-core from the inner to the outer leaflet of the inner membrane. Transmembrane domains (TMD) form a pore in the inner membrane and the ATP-binding domain (NBD) is responsible for energy generation. This Photobacterium profundum (strain SS9) protein is ATP-dependent lipid A-core flippase.